Reading from the N-terminus, the 47-residue chain is Sperm protamine P1 (47 aa).

Belongs to the protamine P1 family. As to expression, testis.

The protein localises to the nucleus. It localises to the chromosome. Functionally, protamines substitute for histones in the chromatin of sperm during the haploid phase of spermatogenesis. They compact sperm DNA into a highly condensed, stable and inactive complex. In Myotis daubentonii (Daubenton's bat), this protein is Sperm protamine P1 (PRM1).